A 61-amino-acid chain; its full sequence is Large ribosomal subunit protein uL30 (61 aa).

The protein belongs to the universal ribosomal protein uL30 family. Part of the 50S ribosomal subunit.

The polypeptide is Large ribosomal subunit protein uL30 (Chlorobaculum parvum (strain DSM 263 / NCIMB 8327) (Chlorobium vibrioforme subsp. thiosulfatophilum)).